The chain runs to 161 residues: 2-C-methyl-D-erythritol 2,4-cyclodiphosphate synthase (161 aa).

Residues D10 and H12 each coordinate a divalent metal cation. 4-CDP-2-C-methyl-D-erythritol 2-phosphate-binding positions include D10–H12 and H36–S37. H44 lines the a divalent metal cation pocket. Residues D58 to G60, F63 to D67, A102 to A108, T134 to E137, F141, and R144 each bind 4-CDP-2-C-methyl-D-erythritol 2-phosphate.

This sequence belongs to the IspF family. As to quaternary structure, homotrimer. A divalent metal cation is required as a cofactor.

The catalysed reaction is 4-CDP-2-C-methyl-D-erythritol 2-phosphate = 2-C-methyl-D-erythritol 2,4-cyclic diphosphate + CMP. The protein operates within isoprenoid biosynthesis; isopentenyl diphosphate biosynthesis via DXP pathway; isopentenyl diphosphate from 1-deoxy-D-xylulose 5-phosphate: step 4/6. Involved in the biosynthesis of isopentenyl diphosphate (IPP) and dimethylallyl diphosphate (DMAPP), two major building blocks of isoprenoid compounds. Catalyzes the conversion of 4-diphosphocytidyl-2-C-methyl-D-erythritol 2-phosphate (CDP-ME2P) to 2-C-methyl-D-erythritol 2,4-cyclodiphosphate (ME-CPP) with a corresponding release of cytidine 5-monophosphate (CMP). The protein is 2-C-methyl-D-erythritol 2,4-cyclodiphosphate synthase of Shewanella sediminis (strain HAW-EB3).